The sequence spans 116 residues: Outer membrane protein assembly factor BamE (116 aa).

The signal sequence occupies residues methionine 1–glycine 22. Residue cysteine 23 is the site of N-palmitoyl cysteine attachment. A lipid anchor (S-diacylglycerol cysteine) is attached at cysteine 23.

The protein belongs to the BamE family. As to quaternary structure, part of the Bam complex, which is composed of the outer membrane protein BamA, and four lipoproteins BamB, BamC, BamD and BamE.

Its subcellular location is the cell outer membrane. Part of the outer membrane protein assembly complex, which is involved in assembly and insertion of beta-barrel proteins into the outer membrane. In Yersinia pestis, this protein is Outer membrane protein assembly factor BamE.